Consider the following 225-residue polypeptide: Chalcone--flavanone isomerase 3 (225 aa).

3 residues coordinate substrate: threonine 51, asparagine 116, and threonine 193.

It belongs to the chalcone isomerase family.

The catalysed reaction is a chalcone = a flavanone.. The protein operates within secondary metabolite biosynthesis; flavonoid biosynthesis. Catalyzes the intramolecular cyclization of bicyclic chalcones into tricyclic (S)-flavanones. Responsible for the isomerization of 4,2',4',6'-tetrahydroxychalcone (also termed chalcone) into naringenin. The chain is Chalcone--flavanone isomerase 3 (CHI3) from Lotus japonicus (Lotus corniculatus var. japonicus).